The primary structure comprises 760 residues: Xaa-Pro dipeptidyl-peptidase (760 aa).

Catalysis depends on charge relay system residues S349, D469, and H499.

Belongs to the peptidase S15 family. In terms of assembly, homodimer.

It is found in the cytoplasm. The enzyme catalyses Hydrolyzes Xaa-Pro-|- bonds to release unblocked, N-terminal dipeptides from substrates including Ala-Pro-|-p-nitroanilide and (sequentially) Tyr-Pro-|-Phe-Pro-|-Gly-Pro-|-Ile.. Its function is as follows. Removes N-terminal dipeptides sequentially from polypeptides having unsubstituted N-termini provided that the penultimate residue is proline. The polypeptide is Xaa-Pro dipeptidyl-peptidase (Streptococcus pyogenes serotype M5 (strain Manfredo)).